A 190-amino-acid chain; its full sequence is Nodulation protein L (190 aa).

Belongs to the transferase hexapeptide repeat family.

Functionally, acetyltransferase implicated in the O-acetylation of Nod factors. The protein is Nodulation protein L (nodL) of Rhizobium leguminosarum bv. viciae.